Here is a 272-residue protein sequence, read N- to C-terminus: uncharacterized protein (272 aa).

2 helical membrane passes run 9–29 (GGDI…ASEH) and 252–272 (SHIS…ISFI).

It localises to the membrane. This is an uncharacterized protein from Caenorhabditis elegans.